We begin with the raw amino-acid sequence, 110 residues long: Large ribosomal subunit protein uL22 (110 aa).

It belongs to the universal ribosomal protein uL22 family. As to quaternary structure, part of the 50S ribosomal subunit.

In terms of biological role, this protein binds specifically to 23S rRNA; its binding is stimulated by other ribosomal proteins, e.g. L4, L17, and L20. It is important during the early stages of 50S assembly. It makes multiple contacts with different domains of the 23S rRNA in the assembled 50S subunit and ribosome. Its function is as follows. The globular domain of the protein is located near the polypeptide exit tunnel on the outside of the subunit, while an extended beta-hairpin is found that lines the wall of the exit tunnel in the center of the 70S ribosome. The protein is Large ribosomal subunit protein uL22 of Syntrophobacter fumaroxidans (strain DSM 10017 / MPOB).